The sequence spans 525 residues: GMP synthase [glutamine-hydrolyzing] (525 aa).

In terms of domain architecture, Glutamine amidotransferase type-1 spans 9–207 (RILILDFGSQ…VQDICGCEAL (199 aa)). The active-site Nucleophile is the Cys-86. Catalysis depends on residues His-181 and Glu-183. Positions 208–400 (WTASNIVEDA…LGLPYDMVYR (193 aa)) constitute a GMPS ATP-PPase domain. 235–241 (SGGVDSS) lines the ATP pocket.

As to quaternary structure, homodimer.

It carries out the reaction XMP + L-glutamine + ATP + H2O = GMP + L-glutamate + AMP + diphosphate + 2 H(+). It functions in the pathway purine metabolism; GMP biosynthesis; GMP from XMP (L-Gln route): step 1/1. Catalyzes the synthesis of GMP from XMP. The sequence is that of GMP synthase [glutamine-hydrolyzing] from Pseudomonas entomophila (strain L48).